The sequence spans 274 residues: Large ribosomal subunit protein uL2 (274 aa).

The tract at residues 223–274 (VAMNPVDHPHGGGEGRTSGGRHPVTPWGVPTKGYKTRSNKRTDKYIVRRRNK) is disordered.

This sequence belongs to the universal ribosomal protein uL2 family. As to quaternary structure, part of the 50S ribosomal subunit. Forms a bridge to the 30S subunit in the 70S ribosome.

One of the primary rRNA binding proteins. Required for association of the 30S and 50S subunits to form the 70S ribosome, for tRNA binding and peptide bond formation. It has been suggested to have peptidyltransferase activity; this is somewhat controversial. Makes several contacts with the 16S rRNA in the 70S ribosome. The polypeptide is Large ribosomal subunit protein uL2 (Shewanella oneidensis (strain ATCC 700550 / JCM 31522 / CIP 106686 / LMG 19005 / NCIMB 14063 / MR-1)).